The chain runs to 37 residues: Large ribosomal subunit protein bL36A (37 aa).

This sequence belongs to the bacterial ribosomal protein bL36 family.

The sequence is that of Large ribosomal subunit protein bL36A from Methylobacillus flagellatus (strain ATCC 51484 / DSM 6875 / VKM B-1610 / KT).